The primary structure comprises 240 residues: Purine nucleoside phosphorylase RC0672 (240 aa).

His60, Cys96, and His113 together coordinate Zn(2+).

This sequence belongs to the purine nucleoside phosphorylase YfiH/LACC1 family. Homodimer. Requires Cu(2+) as cofactor. It depends on Zn(2+) as a cofactor.

It carries out the reaction adenosine + phosphate = alpha-D-ribose 1-phosphate + adenine. It catalyses the reaction S-methyl-5'-thioadenosine + phosphate = 5-(methylsulfanyl)-alpha-D-ribose 1-phosphate + adenine. The catalysed reaction is inosine + phosphate = alpha-D-ribose 1-phosphate + hypoxanthine. The enzyme catalyses adenosine + H2O + H(+) = inosine + NH4(+). In terms of biological role, purine nucleoside enzyme that catalyzes the phosphorolysis of adenosine and inosine nucleosides, yielding D-ribose 1-phosphate and the respective free bases, adenine and hypoxanthine. Also catalyzes the phosphorolysis of S-methyl-5'-thioadenosine into adenine and S-methyl-5-thio-alpha-D-ribose 1-phosphate. Also has adenosine deaminase activity. This is Purine nucleoside phosphorylase RC0672 from Rickettsia conorii (strain ATCC VR-613 / Malish 7).